The sequence spans 523 residues: Probable FAD synthase (523 aa).

The interval Ala20–Ile111 is molybdenum cofactor biosynthesis protein-like. Residues Gln332–Lys489 are FAD synthase.

In the N-terminal section; belongs to the MoaB/Mog family. This sequence in the C-terminal section; belongs to the PAPS reductase family. FAD1 subfamily. The cofactor is Mg(2+).

It catalyses the reaction FMN + ATP + H(+) = FAD + diphosphate. Its pathway is cofactor biosynthesis; FAD biosynthesis; FAD from FMN: step 1/1. In terms of biological role, catalyzes the adenylation of flavin mononucleotide (FMN) to form flavin adenine dinucleotide (FAD) coenzyme. The sequence is that of Probable FAD synthase from Caenorhabditis briggsae.